Consider the following 126-residue polypeptide: Prefoldin subunit beta (126 aa).

The protein belongs to the prefoldin subunit beta family. In terms of assembly, heterohexamer of two alpha and four beta subunits.

The protein localises to the cytoplasm. Functionally, molecular chaperone capable of stabilizing a range of proteins. Seems to fulfill an ATP-independent, HSP70-like function in archaeal de novo protein folding. This chain is Prefoldin subunit beta, found in Saccharolobus islandicus (strain Y.N.15.51 / Yellowstone #2) (Sulfolobus islandicus).